The following is a 174-amino-acid chain: Shikimate kinase 2 (174 aa).

12-17 (GCGKTT) serves as a coordination point for ATP. Mg(2+) is bound by residues Thr-16 and Asp-32. Residues Asp-34, Arg-58, and Gly-79 each coordinate substrate. The tract at residues 112-126 (EAYPLADQRPTLTGR) is LID domain. Arg-120 contributes to the ATP binding site. Arg-139 lines the substrate pocket. Gln-155 provides a ligand contact to ATP.

Belongs to the shikimate kinase family. AroL subfamily. Monomer. Requires Mg(2+) as cofactor.

The protein localises to the cytoplasm. The enzyme catalyses shikimate + ATP = 3-phosphoshikimate + ADP + H(+). It participates in metabolic intermediate biosynthesis; chorismate biosynthesis; chorismate from D-erythrose 4-phosphate and phosphoenolpyruvate: step 5/7. Catalyzes the specific phosphorylation of the 3-hydroxyl group of shikimic acid using ATP as a cosubstrate. This Erwinia tasmaniensis (strain DSM 17950 / CFBP 7177 / CIP 109463 / NCPPB 4357 / Et1/99) protein is Shikimate kinase 2.